Consider the following 155-residue polypeptide: Small ribosomal subunit protein uS7cz/uS7cy (155 aa).

It belongs to the universal ribosomal protein uS7 family. Part of the 30S ribosomal subunit.

It localises to the plastid. It is found in the chloroplast. In terms of biological role, one of the primary rRNA binding proteins, it binds directly to 16S rRNA where it nucleates assembly of the head domain of the 30S subunit. The sequence is that of Small ribosomal subunit protein uS7cz/uS7cy (rps7-A) from Lactuca sativa (Garden lettuce).